Reading from the N-terminus, the 376-residue chain is MNLYRDVLRPLIFSGLRADPETVKVGLLRALEWLDATQATGILALLERLFCYRDPRLEVRLWGLTFPNPIGLAAGFDKDGLAVGVWPSLGFGFVEVGTVTPGPQPGNPKPRLFQLPQDRAALNHMGFNNQGAAALAERLRRLRQRPIPIGINLGKGKATPLEEAAADYLASFRLLRELGDYFVVNVSSPNTAGLRSLQAAEQLAPILATLQGENRGQKPLLVKIAPDLDWPEIDAILELAQAYRLAGLVATNTTLRRDNLKTRFLPGLGPLAAAAGGISGAPLRQRSTQVIRYIHQATQGQLPIIGVGGIFTLADAMEKLEAGASLLQVYTGWVYEGPSLVPRLLRGLAAARNPAPSSPERMPTGIQSGRKIVMDP.

FMN is bound by residues 74-78 (AGFDK) and Thr-98. Lys-78 is a binding site for substrate. 123 to 127 (NHMGF) lines the substrate pocket. FMN contacts are provided by Asn-152 and Asn-185. Asn-185 lines the substrate pocket. Catalysis depends on Ser-188, which acts as the Nucleophile. Position 190 (Asn-190) interacts with substrate. FMN-binding residues include Lys-223 and Thr-251. 252-253 (NT) serves as a coordination point for substrate. Residues Gly-280, Gly-309, and 330–331 (YT) each bind FMN. Positions 352 to 376 (RNPAPSSPERMPTGIQSGRKIVMDP) are disordered.

This sequence belongs to the dihydroorotate dehydrogenase family. Type 2 subfamily. In terms of assembly, monomer. The cofactor is FMN.

It is found in the cell membrane. It catalyses the reaction (S)-dihydroorotate + a quinone = orotate + a quinol. It participates in pyrimidine metabolism; UMP biosynthesis via de novo pathway; orotate from (S)-dihydroorotate (quinone route): step 1/1. In terms of biological role, catalyzes the conversion of dihydroorotate to orotate with quinone as electron acceptor. The protein is Dihydroorotate dehydrogenase (quinone) of Synechococcus sp. (strain JA-3-3Ab) (Cyanobacteria bacterium Yellowstone A-Prime).